We begin with the raw amino-acid sequence, 1059 residues long: Pleckstrin homology domain-containing family M member 1 (1059 aa).

The 143-residue stretch at 40 to 182 (TSEDGDANTM…LSFELSYKSA (143 aa)) folds into the RUN domain. A Phosphoserine modification is found at S218. Disordered regions lie at residues 218 to 244 (SLDSISHSSGSEDIEVQHSGHKIRRDR), 272 to 334 (LQEN…TPMF), and 354 to 411 (SEEP…DQGS). 2 stretches are compositionally biased toward polar residues: residues 313-334 (SKAQVNSAPSSGPSQESDTPMF) and 392-401 (GSTSDQQPSS). S430, S433, and S488 each carry phosphoserine. Residues 536 to 627 (GLMKLGTVAR…WLDRVREALQ (92 aa)) enclose the PH 1 domain. The LIR signature appears at 634 to 640 (EEEWVNI). The segment at 657–1059 (LPPYSALLPE…RKYQEQNTVS (403 aa)) is interaction with RAB7A. One can recognise a PH 2 domain in the interval 686–780 (DAIKESLLYL…WRDLVRKVLA (95 aa)). A Phorbol-ester/DAG-type zinc finger spans residues 989–1043 (QHVYHCDLCTQRGFICQICHHQDIIFPFEFDTTVRCAECRTVFHQSCQAVVRKGC).

Interacts (via N- and C-terminus) with RAB7A (GTP-bound form). Simultaneously interacts with RAB7A and ARL8B; bringing about clustering and fusion of late endosomes and lysosomes. Interacts (via RUN domain) with ARL8B (GTP-bound form); the interaction is required for PLEKHM1 localization to lysosomes and for ARL8B function in delivery and degradation of endocytic and autophagic cargo in lysosomes. PLEKHM1 and PLEKHM2 compete for interaction with ARL8B. Interacts with ARL8A; the interaction is weaker than with ARL8B. Interacts with VPS41, VPS11, VPS18, VPS33A and VPS39; indicative for an association with the HOPS complex; the interactions with, at least, VPS41, VPS11, VPS18 and VPS33A require ARL8B. Interacts with GABARAP, GABARAPL, GABARAPL2, MAP1LC3A, MAP1LC3B and MAP1LC3C. Interacts with PAFAH1B. Interacts (via N- and C-terminus) with NDEL1. Interacts (via C-terminus) with MAP3K7. Interacts (via N- and C-terminus) with FAM98A. Interacts (via C-terminus) with DEF8; this interaction is weak but increased in a RAB7A-dependent manner. May interact with sialyl-lex-positive protein. Expressed in testis, skeletal muscle, lung, liver, spleen, brain, heart, kidney and bone. Weakly expressed in monocytes (at protein level).

It is found in the autolysosome membrane. It localises to the endosome membrane. The protein localises to the late endosome membrane. Its subcellular location is the lysosome membrane. Functionally, acts as a multivalent adapter protein that regulates Rab7-dependent and HOPS complex-dependent fusion events in the endolysosomal system and couples autophagic and the endocytic trafficking pathways. Acts as a dual effector of RAB7A and ARL8B that simultaneously binds these GTPases, bringing about clustering and fusion of late endosomes and lysosomes. Required for late stages of endolysosomal maturation, facilitating both endocytosis-mediated degradation of growth factor receptors and autophagosome clearance. Interaction with Arl8b is a crucial factor in the terminal maturation of autophagosomes and to mediate autophagosome-lysosome fusion. Positively regulates lysosome peripheral distribution and ruffled border formation in osteoclasts. May be involved in negative regulation of endocytic transport from early endosome to late endosome/lysosome implicating its association with Rab7. May have a role in sialyl-lex-mediated transduction of apoptotic signals. Involved in bone resorption. This Rattus norvegicus (Rat) protein is Pleckstrin homology domain-containing family M member 1.